A 465-amino-acid chain; its full sequence is ATP synthase subunit beta (465 aa).

149-156 (GGAGVGKT) lines the ATP pocket.

It belongs to the ATPase alpha/beta chains family. In terms of assembly, F-type ATPases have 2 components, CF(1) - the catalytic core - and CF(0) - the membrane proton channel. CF(1) has five subunits: alpha(3), beta(3), gamma(1), delta(1), epsilon(1). CF(0) has three main subunits: a(1), b(2) and c(9-12). The alpha and beta chains form an alternating ring which encloses part of the gamma chain. CF(1) is attached to CF(0) by a central stalk formed by the gamma and epsilon chains, while a peripheral stalk is formed by the delta and b chains.

The protein resides in the cell inner membrane. The catalysed reaction is ATP + H2O + 4 H(+)(in) = ADP + phosphate + 5 H(+)(out). Produces ATP from ADP in the presence of a proton gradient across the membrane. The catalytic sites are hosted primarily by the beta subunits. This chain is ATP synthase subunit beta, found in Dictyoglomus thermophilum (strain ATCC 35947 / DSM 3960 / H-6-12).